The primary structure comprises 124 residues: Glycine cleavage system H protein (124 aa).

The Lipoyl-binding domain occupies 22 to 104 (LIVTGISDHA…YGKGWIYKMK (83 aa)). Position 63 is an N6-lipoyllysine (lysine 63).

It belongs to the GcvH family. As to quaternary structure, the glycine cleavage system is composed of four proteins: P, T, L and H. Requires (R)-lipoate as cofactor.

In terms of biological role, the glycine cleavage system catalyzes the degradation of glycine. The H protein shuttles the methylamine group of glycine from the P protein to the T protein. This Acinetobacter baylyi (strain ATCC 33305 / BD413 / ADP1) protein is Glycine cleavage system H protein.